We begin with the raw amino-acid sequence, 384 residues long: Putative pectate lyase 2 (384 aa).

A signal peptide spans 1–23 (MASLFLTIISLLFAAFSSSVVEA). Residues aspartate 182, aspartate 206, and aspartate 210 each contribute to the Ca(2+) site. Residue arginine 262 is part of the active site.

The protein belongs to the polysaccharide lyase 1 family. Ca(2+) serves as cofactor.

The catalysed reaction is Eliminative cleavage of (1-&gt;4)-alpha-D-galacturonan to give oligosaccharides with 4-deoxy-alpha-D-galact-4-enuronosyl groups at their non-reducing ends.. It functions in the pathway glycan metabolism; pectin degradation; 2-dehydro-3-deoxy-D-gluconate from pectin: step 2/5. The chain is Putative pectate lyase 2 from Arabidopsis thaliana (Mouse-ear cress).